The chain runs to 429 residues: RNA-binding protein BRN2 (429 aa).

RRM domains are found at residues 12–93 (VKLF…YADG), 100–180 (HKLF…WADT), and 330–408 (ANLF…LKRD). The interval 410–429 (GQQQQQQQSKNPLFNGLLNS) is disordered. Residues 418 to 429 (SKNPLFNGLLNS) show a composition bias toward polar residues.

Expressed in roots, stems, flowers and siliques.

It localises to the cytoplasm. Functionally, RNA-binding protein involved in the regulation of flowering time. Acts as a repressor of the activity of SOC1, a transcriptional activator of flowering time. Binds to the 3'-UTR of SOC1 mRNA in the cytoplasm and participates in SOC1 mRNA decay, mediated by the distal region of the SOC1 3'-UTR. This Arabidopsis thaliana (Mouse-ear cress) protein is RNA-binding protein BRN2.